The sequence spans 87 residues: Small ribosomal subunit protein bS20 (87 aa).

Residues 1–12 (MANHKSALKRNR) are compositionally biased toward basic residues. The segment at 1 to 21 (MANHKSALKRNRQAAVRNARN) is disordered.

Belongs to the bacterial ribosomal protein bS20 family.

Binds directly to 16S ribosomal RNA. The polypeptide is Small ribosomal subunit protein bS20 (Syntrophotalea carbinolica (strain DSM 2380 / NBRC 103641 / GraBd1) (Pelobacter carbinolicus)).